The sequence spans 447 residues: Monocarboxylate transporter 11 (447 aa).

Topologically, residues 1–11 (MTPKPAGPPDG) are cytoplasmic. A run of 12 helical transmembrane segments spans residues 12-32 (GWGW…YGLL), 54-74 (AWVS…GSAL), 80-100 (ARPV…FSAF), 107-127 (LYLG…APAL), 139-159 (VLAV…LAPA), 162-182 (FLLD…VTLH), 219-239 (AFSV…VPYV), 249-269 (GMGG…DACA), 288-308 (LVVF…VPTV), 330-350 (GSYA…GGVV), 354-374 (GLVM…SGFL), and 383-403 (ASFL…MGLP). Residues 404 to 447 (RALPSCRPASPPATPPPERGELLPVPQVSLLSAGGTGSIRDTTC) are Cytoplasmic-facing.

Belongs to the major facilitator superfamily. Monocarboxylate porter (TC 2.A.1.13) family. In terms of assembly, interacts with isoform 2 of BSG.

Its subcellular location is the endoplasmic reticulum membrane. It localises to the cell membrane. It carries out the reaction pyruvate(out) + H(+)(out) = pyruvate(in) + H(+)(in). Its function is as follows. Proton-linked monocarboxylate transporter. It catalyzes the transport of pyruvate across the plasma membrane. Probably involved in hepatic lipid metabolism: overexpression results in an increase of triacylglycerol(TAG) levels, small increases in intracellular diacylglycerols and decreases in lysophosphatidylcholine, cholesterol ester and sphingomyelin lipids. The polypeptide is Monocarboxylate transporter 11 (Slc16a11) (Mus musculus (Mouse)).